The following is a 202-amino-acid chain: uncharacterized protein (202 aa).

The chain crosses the membrane as a helical span at residues 18 to 38 (FLIFLIFLSVLGCGITISGCI).

Its subcellular location is the membrane. This is an uncharacterized protein from Methanocaldococcus jannaschii (strain ATCC 43067 / DSM 2661 / JAL-1 / JCM 10045 / NBRC 100440) (Methanococcus jannaschii).